Here is a 308-residue protein sequence, read N- to C-terminus: NAD-dependent protein deacylase SIR4 (308 aa).

A mitochondrion-targeting transit peptide spans 1-16; sequence MAATKLHPALRNAIRA. In terms of domain architecture, Deacetylase sirtuin-type spans 28–308; it reads TFDVQEGIKL…EVLPAALRQL (281 aa). Residues 53–73 and 129–132 contribute to the NAD(+) site; these read GAGI…RPPH and QNVD. The active-site Proton acceptor is the His-147. Zn(2+) is bound by residues Cys-155, Cys-158, Cys-211, and Cys-214. Residues 251 to 253, 277 to 279, and Ile-297 each bind NAD(+); these read GTS and NSG.

This sequence belongs to the sirtuin family. Class II subfamily. It depends on Zn(2+) as a cofactor.

The protein localises to the mitochondrion matrix. It carries out the reaction N(6)-acetyl-L-lysyl-[protein] + NAD(+) + H2O = 2''-O-acetyl-ADP-D-ribose + nicotinamide + L-lysyl-[protein]. Functionally, NAD-dependent protein deacylase. Catalyzes the NAD-dependent hydrolysis of acyl groups from lysine residues. The polypeptide is NAD-dependent protein deacylase SIR4 (Monosiga brevicollis (Choanoflagellate)).